The chain runs to 213 residues: Ribonuclease HII (213 aa).

One can recognise an RNase H type-2 domain in the interval G18–N213. The a divalent metal cation site is built by D24, E25, and D116.

This sequence belongs to the RNase HII family. Mn(2+) serves as cofactor. It depends on Mg(2+) as a cofactor.

Its subcellular location is the cytoplasm. The catalysed reaction is Endonucleolytic cleavage to 5'-phosphomonoester.. In terms of biological role, endonuclease that specifically degrades the RNA of RNA-DNA hybrids. This is Ribonuclease HII from Shewanella sediminis (strain HAW-EB3).